The sequence spans 1183 residues: Peroxisomal ATPase PEX6 (1183 aa).

Positions Glu161–Val205 are disordered. A compositionally biased stretch (acidic residues) spans Gly183–Asn204. Residues Leu576 to Glu785 form an AAA-cassette D1 region. The tract at residues Gly878 to Thr1070 is AAA-cassette D2. Gly883–Thr890 provides a ligand contact to ATP. The segment at Ile1160 to Tyr1183 is disordered. Residues Phe1173–Tyr1183 show a composition bias toward acidic residues.

The protein belongs to the AAA ATPase family. As to quaternary structure, interacts with PEX1; forming the PEX1-PEX6 AAA ATPase complex, which is composed of a heterohexamer formed by a trimer of PEX1-PEX6 dimers.

The protein localises to the cytoplasm. It localises to the cytosol. Its subcellular location is the peroxisome membrane. The catalysed reaction is ATP + H2O = ADP + phosphate + H(+). Its function is as follows. Component of the PEX1-PEX6 AAA ATPase complex, a protein dislocase complex that mediates the ATP-dependent extraction of the PEX5 receptor from peroxisomal membranes, an essential step for PEX5 recycling. Specifically recognizes PEX5 monoubiquitinated at 'Cys-6', and pulls it out of the peroxisome lumen through the PEX2-PEX10-PEX12 retrotranslocation channel. Extraction by the PEX1-PEX6 AAA ATPase complex is accompanied by unfolding of the TPR repeats and release of bound cargo from PEX5. Regulates autophagy and biogenesis of peroxisomes and Woronin bodies. Plays important roles in mycelial growth and development and stress response. Is also essential for conidiation and fatty acid utilization. Required for nematode predation via trap formation. The sequence is that of Peroxisomal ATPase PEX6 from Arthrobotrys oligospora (strain ATCC 24927 / CBS 115.81 / DSM 1491) (Nematode-trapping fungus).